The following is a 235-amino-acid chain: C-&gt;U-editing enzyme APOBEC-1 (235 aa).

A CMP/dCMP-type deaminase domain is found at 10–131; that stretch reads GDATLRRRIK…MDQQHRQGLK (122 aa). Residue His60 participates in Zn(2+) binding. The active-site Proton donor is Glu62. Zn(2+) contacts are provided by Cys92 and Cys95.

This sequence belongs to the cytidine and deoxycytidylate deaminase family. As to quaternary structure, homodimer. Interacts with A1CF; form an mRNA editing complex. Interacts with RBM47; form an mRNA editing complex. Found in a complex with CELF2/CUGBP2 and A1CF. Interacts with HNRPAB. Interacts with SYNCRIP. It depends on Zn(2+) as a cofactor.

The protein localises to the cytoplasm. Its subcellular location is the nucleus. It catalyses the reaction a cytidine in mRNA + H2O + H(+) = a uridine in mRNA + NH4(+). The catalysed reaction is cytidine(6666) in apoB mRNA + H2O + H(+) = uridine(6666) in apoB mRNA + NH4(+). Cytidine deaminase catalyzing the cytidine to uridine postranscriptional editing of a variety of mRNAs. Form complexes with cofactors that confer differential editing activity and selectivity. Responsible for the postranscriptional editing of a CAA codon for Gln to a UAA codon for stop in the apolipoprotein B mRNA. Also involved in CGA (Arg) to UGA (Stop) editing in the NF1 mRNA. May also play a role in the epigenetic regulation of gene expression by participating in DNA demethylation. The protein is C-&gt;U-editing enzyme APOBEC-1 of Monodelphis domestica (Gray short-tailed opossum).